The sequence spans 348 residues: NADH-ubiquinone oxidoreductase chain 2 (348 aa).

The next 10 helical transmembrane spans lie at methionine 1–phenylalanine 21, serine 25–valine 45, phenylalanine 60–methionine 80, leucine 93–leucine 115, leucine 149–glycine 169, lysine 177–serine 197, leucine 200–methionine 220, isoleucine 239–glycine 259, asparagine 274–leucine 294, and leucine 326–isoleucine 346.

The protein belongs to the complex I subunit 2 family.

It localises to the mitochondrion inner membrane. It catalyses the reaction a ubiquinone + NADH + 5 H(+)(in) = a ubiquinol + NAD(+) + 4 H(+)(out). Functionally, core subunit of the mitochondrial membrane respiratory chain NADH dehydrogenase (Complex I) that is believed to belong to the minimal assembly required for catalysis. Complex I functions in the transfer of electrons from NADH to the respiratory chain. The immediate electron acceptor for the enzyme is believed to be ubiquinone. The protein is NADH-ubiquinone oxidoreductase chain 2 (MT-ND2) of Latimeria chalumnae (Coelacanth).